The following is a 120-amino-acid chain: MDYEFLRDLTGQVLVRFSMGHEVIGHWLNEEIKGDLAKLDQIEAAAAEVKGSERQWQLDGHEYTLWLDGEEVMVRANQLDIEGDEMEEGMNYYDEESLCLCGLEDFLRVLQGYRNFIISK.

This sequence belongs to the UPF0231 family.

The sequence is that of UPF0231 protein YE0706 from Yersinia enterocolitica serotype O:8 / biotype 1B (strain NCTC 13174 / 8081).